The sequence spans 203 residues: Holliday junction branch migration complex subunit RuvA (203 aa).

Positions 1-63 (MYEYLKGLVT…DTDITLFGFY (63 aa)) are domain I. Residues 64 to 142 (DLDEKQLFQK…DLEQSATLVG (79 aa)) form a domain II region. Residues 143–153 (QTAIDLGSQGD) form a flexible linker region. A domain III region spans residues 153–203 (DSPELSDALAALSALGYSAREVKAITPKLTDFAAQTTDQYLREGLRLLMKK).

It belongs to the RuvA family. As to quaternary structure, homotetramer. Forms an RuvA(8)-RuvB(12)-Holliday junction (HJ) complex. HJ DNA is sandwiched between 2 RuvA tetramers; dsDNA enters through RuvA and exits via RuvB. An RuvB hexamer assembles on each DNA strand where it exits the tetramer. Each RuvB hexamer is contacted by two RuvA subunits (via domain III) on 2 adjacent RuvB subunits; this complex drives branch migration. In the full resolvosome a probable DNA-RuvA(4)-RuvB(12)-RuvC(2) complex forms which resolves the HJ.

It localises to the cytoplasm. Functionally, the RuvA-RuvB-RuvC complex processes Holliday junction (HJ) DNA during genetic recombination and DNA repair, while the RuvA-RuvB complex plays an important role in the rescue of blocked DNA replication forks via replication fork reversal (RFR). RuvA specifically binds to HJ cruciform DNA, conferring on it an open structure. The RuvB hexamer acts as an ATP-dependent pump, pulling dsDNA into and through the RuvAB complex. HJ branch migration allows RuvC to scan DNA until it finds its consensus sequence, where it cleaves and resolves the cruciform DNA. This Latilactobacillus sakei subsp. sakei (strain 23K) (Lactobacillus sakei subsp. sakei) protein is Holliday junction branch migration complex subunit RuvA.